The chain runs to 257 residues: Type III pantothenate kinase (257 aa).

Position 6–13 (6–13 (DVGNTNTV)) interacts with ATP. Residues Tyr-100 and 107 to 110 (GADR) contribute to the substrate site. The active-site Proton acceptor is Asp-109. K(+) is bound at residue Asp-129. Thr-132 contributes to the ATP binding site. Thr-185 contacts substrate.

It belongs to the type III pantothenate kinase family. In terms of assembly, homodimer. It depends on NH4(+) as a cofactor. Requires K(+) as cofactor.

It localises to the cytoplasm. The catalysed reaction is (R)-pantothenate + ATP = (R)-4'-phosphopantothenate + ADP + H(+). The protein operates within cofactor biosynthesis; coenzyme A biosynthesis; CoA from (R)-pantothenate: step 1/5. Catalyzes the phosphorylation of pantothenate (Pan), the first step in CoA biosynthesis. The polypeptide is Type III pantothenate kinase (Desulfatibacillum aliphaticivorans).